The following is a 218-amino-acid chain: Small ribosomal subunit protein uS3c (218 aa).

The KH type-2 domain occupies 47-118 (VQNNIRISSG…KLNIAITRIS (72 aa)).

Belongs to the universal ribosomal protein uS3 family. As to quaternary structure, part of the 30S ribosomal subunit.

The protein localises to the plastid. It localises to the chloroplast. In Draba nemorosa (Woodland whitlowgrass), this protein is Small ribosomal subunit protein uS3c (rps3).